We begin with the raw amino-acid sequence, 225 residues long: AA9 family lytic polysaccharide monooxygenase A (225 aa).

Positions 1 to 17 (MLTTTFALLTAALGVSA) are cleaved as a signal peptide. The Cu(2+) site is built by His-18 and His-85. Intrachain disulfides connect Cys-55/Cys-173 and Cys-143/Cys-225. Residues His-159 and Gln-168 each contribute to the O2 site. Tyr-170 contacts Cu(2+).

This sequence belongs to the polysaccharide monooxygenase AA9 family. The cofactor is Cu(2+).

It localises to the secreted. It carries out the reaction [(1-&gt;4)-beta-D-glucosyl]n+m + reduced acceptor + O2 = 4-dehydro-beta-D-glucosyl-[(1-&gt;4)-beta-D-glucosyl]n-1 + [(1-&gt;4)-beta-D-glucosyl]m + acceptor + H2O.. Is able to utilize various natural phenolic compounds as reducing agents. Most of these reducing agents are present in plants, either free or as lignin building blocks, such as sinapic acid, or as flavonoids such as catechin and dopamine. Phenolic compounds with 1,2-benzenediol and 1,2,3-benzenetriol moieties yield the highest release of oxidized and non-oxidized glucooligosaccharides from cellulose compared to monophenols or sulfur-containing compounds. Functionally, lytic polysaccharide monooxygenase (LPMO) that depolymerizes crystalline and amorphous polysaccharides via the oxidation of scissile alpha- or beta-(1-4)-glycosidic bonds, yielding C1 or C4 oxidation products. Catalysis by LPMOs requires the reduction of the active-site copper from Cu(II) to Cu(I) by a reducing agent and H(2)O(2) or O(2) as a cosubstrate. Shows oxidative cleavage of xylan in addition to cellulose. Shows a strong synergistic effect with endoglucanase I (EGI) with a 16-fold higher release of detected oligosaccharides. This Thermothelomyces thermophilus (strain ATCC 42464 / BCRC 31852 / DSM 1799) (Sporotrichum thermophile) protein is AA9 family lytic polysaccharide monooxygenase A.